Consider the following 204-residue polypeptide: Guanylate kinase (204 aa).

The Guanylate kinase-like domain occupies 1 to 182; the sequence is MLYIISAPSG…ALSDLNTIIC (182 aa). 7–14 is an ATP binding site; the sequence is APSGTGKS.

It belongs to the guanylate kinase family.

The protein resides in the cytoplasm. The enzyme catalyses GMP + ATP = GDP + ADP. Its function is as follows. Essential for recycling GMP and indirectly, cGMP. In Baumannia cicadellinicola subsp. Homalodisca coagulata, this protein is Guanylate kinase.